A 614-amino-acid polypeptide reads, in one-letter code: Putative binding protein BMEII0691 (614 aa).

The signal sequence occupies residues 1–28 (MNRFIAFFRSVFLIGLVATAFGALPARA).

It belongs to the bacterial solute-binding protein 5 family.

Its subcellular location is the periplasm. In Brucella melitensis biotype 1 (strain ATCC 23456 / CCUG 17765 / NCTC 10094 / 16M), this protein is Putative binding protein BMEII0691.